A 340-amino-acid chain; its full sequence is Guanine nucleotide-binding protein G(I)/G(S)/G(T) subunit beta-1 (340 aa).

An N-acetylserine modification is found at Ser2. Ser2 is modified (phosphoserine). 7 WD repeats span residues 46–94, 95–140, 141–181, 182–223, 224–267, 268–309, and 310–340; these read RTRR…HAIP, LRSS…RELA, GHTG…TTFT, GHTG…QTFT, GHES…YSHD, NIIC…GVLA, and GHDD…KIWN. His266 carries the phosphohistidine modification.

It belongs to the WD repeat G protein beta family. In terms of assembly, g proteins are composed of 3 units, alpha, beta and gamma. The heterodimer formed by GNB1 and GNG2 interacts with ARHGEF5. The heterodimer formed by GNB1 and GNG2 interacts with GRK2. Forms a complex with GNAO1 and GNG3. Interacts with ARHGEF18 and RASD2. Forms complexes with TAS2R14 and G-proteins; these complexes play a role in the perception of bitterness. Component of the TAS2R14-GNAI1 complex, consisting of TAS2R14, GNAI1, GNB1 and GNG2. Component of the TAS2R14-GNAT3 complex, consisting of TAS2R14, GNAT3, GNB1 and GNG2. Component of the TAS2R14-GNAS2 complex, consisting of TAS2R14, GNAS2, GNB1 and GNG2. In terms of processing, phosphorylation at His-266 by NDKB contributes to G protein activation by increasing the high energetic phosphate transfer onto GDP.

Guanine nucleotide-binding proteins (G proteins) are involved as a modulator or transducer in various transmembrane signaling systems. The beta and gamma chains are required for the GTPase activity, for replacement of GDP by GTP, and for G protein-effector interaction. The chain is Guanine nucleotide-binding protein G(I)/G(S)/G(T) subunit beta-1 (GNB1) from Pongo abelii (Sumatran orangutan).